The following is a 272-amino-acid chain: Indole-3-glycerol phosphate synthase (272 aa).

Belongs to the TrpC family.

It catalyses the reaction 1-(2-carboxyphenylamino)-1-deoxy-D-ribulose 5-phosphate + H(+) = (1S,2R)-1-C-(indol-3-yl)glycerol 3-phosphate + CO2 + H2O. The protein operates within amino-acid biosynthesis; L-tryptophan biosynthesis; L-tryptophan from chorismate: step 4/5. The chain is Indole-3-glycerol phosphate synthase (trpC) from Mycobacterium tuberculosis (strain CDC 1551 / Oshkosh).